The following is a 122-amino-acid chain: Small ribosomal subunit protein uS13 (122 aa).

The segment at 93-122 is disordered; it reads RLSLPVRGQRTKTNSRTRKGKRKTVAGKKK. The segment covering 101–122 has biased composition (basic residues); that stretch reads QRTKTNSRTRKGKRKTVAGKKK.

It belongs to the universal ribosomal protein uS13 family. Part of the 30S ribosomal subunit. Forms a loose heterodimer with protein S19. Forms two bridges to the 50S subunit in the 70S ribosome.

Located at the top of the head of the 30S subunit, it contacts several helices of the 16S rRNA. In the 70S ribosome it contacts the 23S rRNA (bridge B1a) and protein L5 of the 50S subunit (bridge B1b), connecting the 2 subunits; these bridges are implicated in subunit movement. Contacts the tRNAs in the A and P-sites. The polypeptide is Small ribosomal subunit protein uS13 (Chlamydia caviae (strain ATCC VR-813 / DSM 19441 / 03DC25 / GPIC) (Chlamydophila caviae)).